The sequence spans 337 residues: Serpentine receptor class delta-18 (337 aa).

The next 6 membrane-spanning stretches (helical) occupy residues 2-22 (IIFF…LNLL), 90-110 (VGLS…LLSF), 130-150 (LILV…TIFA), 187-207 (IYSI…IFIL), 236-256 (ALTI…FYFL), and 270-290 (SIYA…LYFV).

It belongs to the nematode receptor-like protein srd family.

The protein resides in the membrane. In Caenorhabditis elegans, this protein is Serpentine receptor class delta-18 (srd-18).